The following is a 76-amino-acid chain: ATP synthase subunit c (76 aa).

2 helical membrane-spanning segments follow: residues 8 to 28 and 55 to 75; these read LLAA…GVGI and VAFA…LIFV.

This sequence belongs to the ATPase C chain family. F-type ATPases have 2 components, F(1) - the catalytic core - and F(0) - the membrane proton channel. F(1) has five subunits: alpha(3), beta(3), gamma(1), delta(1), epsilon(1). F(0) has three main subunits: a(1), b(2) and c(10-14). The alpha and beta chains form an alternating ring which encloses part of the gamma chain. F(1) is attached to F(0) by a central stalk formed by the gamma and epsilon chains, while a peripheral stalk is formed by the delta and b chains.

Its subcellular location is the cell membrane. In terms of biological role, f(1)F(0) ATP synthase produces ATP from ADP in the presence of a proton or sodium gradient. F-type ATPases consist of two structural domains, F(1) containing the extramembraneous catalytic core and F(0) containing the membrane proton channel, linked together by a central stalk and a peripheral stalk. During catalysis, ATP synthesis in the catalytic domain of F(1) is coupled via a rotary mechanism of the central stalk subunits to proton translocation. Functionally, key component of the F(0) channel; it plays a direct role in translocation across the membrane. A homomeric c-ring of between 10-14 subunits forms the central stalk rotor element with the F(1) delta and epsilon subunits. The protein is ATP synthase subunit c of Dehalococcoides mccartyi (strain ATCC BAA-2266 / KCTC 15142 / 195) (Dehalococcoides ethenogenes (strain 195)).